A 459-amino-acid polypeptide reads, in one-letter code: Glutamate--isopropylamine ligase (459 aa).

The GS beta-grasp domain occupies H19–G115. Residues P122–I459 form the GS catalytic domain.

Belongs to the glutamine synthetase family.

The enzyme catalyses isopropylamine + L-glutamate + ATP = gamma-L-glutamyl-isopropylamide + ADP + phosphate + H(+). Involved in the degradation of isopropylamine, which is a constituent of the herbicides atrazine. Catalyzes the ATP-dependent formation of gamma-glutamyl-isopropylamide from isopropylamine and L-glutamate. It can also use aminoalkanes, amino-alcohols (L-alaninol and D-alaninol) and amino-esters as substrates. The sequence is that of Glutamate--isopropylamine ligase (ipuC) from Pseudomonas sp.